The following is a 509-amino-acid chain: Zinc finger protein Aiolos (509 aa).

The interval 1–85 is disordered; it reads MEDIKPNVEL…PMGNAEEPEI (85 aa). Residues 10–20 show a composition bias toward polar residues; it reads LKSTQEQSVPT. Position 20 is a phosphothreonine (T20). Positions 56–72 are enriched in basic and acidic residues; the sequence is DSMKVKDEYSERDENVL. Residues K61, K73, and K100 each participate in a glycyl lysine isopeptide (Lys-Gly) (interchain with G-Cter in SUMO2) cross-link. 3 C2H2-type zinc fingers span residues 118–140, 146–168, and 174–196; these read MNCDVCGLSCISFNVLMVHKRSH, FQCNQCGASFTQKGNLLRHIKLH, and FKCHLCNYACQRRDALTGHLRTH. The segment at 202–224 adopts a C2H2-type 4; atypical zinc-finger fold; it reads YKCEFCGRSYKQRSSLEEHKERC. K245 participates in a covalent cross-link: Glycyl lysine isopeptide (Lys-Gly) (interchain with G-Cter in SUMO2). A Phosphothreonine modification is found at T326. The interval 365–421 is disordered; sequence HLPEKSLPSERGLSPTNSGHDSTDTDSNHEERQNHIYQQNPMVPPRARNGMPLLKEG. S378 is subject to Phosphoserine. Basic and acidic residues predominate over residues 385–398; sequence DSTDTDSNHEERQN. The segment at 452-474 adopts a C2H2-type 5 zinc-finger fold; that stretch reads YRCDHCRVLFLDYVMFTIHMGCH. A mediates homodimerization and heterodimerization region spans residues 452–504; the sequence is YRCDHCRVLFLDYVMFTIHMGCHGFRDPFECNMCGYRSHDRYEFSSHIARGEH. The C2H2-type 6; atypical zinc-finger motif lies at 480-504; it reads FECNMCGYRSHDRYEFSSHIARGEH.

This sequence belongs to the Ikaros C2H2-type zinc-finger protein family. Homodimer. Heterodimer with other IKAROS family members. Interacts with IKZF4 and IKZF5. Interacts with IKZF1. Interacts with HRAS. Interacts with FOXP3; this interaction may be required for silencing target genes and regulating the suppressive activity of FOXP3-positive regulatory T-cells (Treg). Interacts with BCL21L; this interaction blocks the anti-apoptotic role of BCL21L. Associates with histone deacetylase complexes containing HDAC1, MTA2 and SIN3A.

It localises to the nucleus. The protein localises to the cytoplasm. In terms of biological role, transcription factor that plays an important role in the regulation of lymphocyte differentiation. Plays an essential role in regulation of B-cell differentiation, proliferation and maturation to an effector state. Involved in regulating BCL2 expression and controlling apoptosis in T-cells in an IL2-dependent manner. The protein is Zinc finger protein Aiolos (IKZF3) of Bos taurus (Bovine).